Consider the following 295-residue polypeptide: Ribosomal RNA small subunit methyltransferase A (295 aa).

S-adenosyl-L-methionine contacts are provided by Asn31, Leu33, Gly58, Glu79, Asp104, and Asn129.

The protein belongs to the class I-like SAM-binding methyltransferase superfamily. rRNA adenine N(6)-methyltransferase family. RsmA subfamily.

It localises to the cytoplasm. It catalyses the reaction adenosine(1518)/adenosine(1519) in 16S rRNA + 4 S-adenosyl-L-methionine = N(6)-dimethyladenosine(1518)/N(6)-dimethyladenosine(1519) in 16S rRNA + 4 S-adenosyl-L-homocysteine + 4 H(+). Its function is as follows. Specifically dimethylates two adjacent adenosines (A1518 and A1519) in the loop of a conserved hairpin near the 3'-end of 16S rRNA in the 30S particle. May play a critical role in biogenesis of 30S subunits. This Leuconostoc citreum (strain KM20) protein is Ribosomal RNA small subunit methyltransferase A.